The chain runs to 93 residues: Class II hydrophobin 1 (93 aa).

The signal sequence occupies residues 1 to 16; that stretch reads MKFFAVAALFVASAMA. Disulfide bonds link cysteine 24/cysteine 74, cysteine 35/cysteine 65, cysteine 36/cysteine 48, and cysteine 75/cysteine 86.

This sequence belongs to the cerato-ulmin hydrophobin family. As to quaternary structure, interacts with maize ubiquilin 1-like (UBL) protein. Homotetramer. Further self-assembles to form highly ordered films at water-air interfaces through intermolecular interactions.

Its subcellular location is the cell membrane. In terms of biological role, aerial growth, conidiation, and dispersal of filamentous fungi in the environment rely upon a capability of their secreting small amphipathic proteins called hydrophobins (HPBs) with low sequence identity. Class I can self-assemble into an outermost layer of rodlet bundles on aerial cell surfaces, conferring cellular hydrophobicity that supports fungal growth, development and dispersal; whereas Class II form highly ordered films at water-air interfaces through intermolecular interactions but contribute nothing to the rodlet structure. Hyd1 is a class II hydrophobin that acts as an elicitor of induced systemic resistance (ISR) in plants. During interaction with the plant, binds with the maize target protein UBL in order to recruit more UBL proteins in maize roots to elicit plant defense responses, including cell death as well as brassinosteroid, jasmonate (JA) and ethylene (ET) signaling. The polypeptide is Class II hydrophobin 1 (Trichoderma harzianum (Hypocrea lixii)).